Reading from the N-terminus, the 230-residue chain is Uracil-DNA glycosylase (230 aa).

D71 serves as the catalytic Proton acceptor.

This sequence belongs to the uracil-DNA glycosylase (UDG) superfamily. UNG family.

It localises to the cytoplasm. It carries out the reaction Hydrolyzes single-stranded DNA or mismatched double-stranded DNA and polynucleotides, releasing free uracil.. Its function is as follows. Excises uracil residues from the DNA which can arise as a result of misincorporation of dUMP residues by DNA polymerase or due to deamination of cytosine. The chain is Uracil-DNA glycosylase from Tropheryma whipplei (strain TW08/27) (Whipple's bacillus).